The sequence spans 347 residues: 3-keto-steroid reductase ERG27 (347 aa).

Positions 15, 38, and 44 each coordinate NADP(+). Catalysis depends on proton donor residues Ser179 and Tyr202. NADP(+) contacts are provided by Tyr202, Lys206, and Ser237. Lys206 acts as the Lowers pKa of active site Tyr in catalysis. The residue at position 345 (Thr345) is a Phosphothreonine.

It belongs to the short-chain dehydrogenases/reductases (SDR) family. ERG27 subfamily. Heterotetramer of ERG25, ERG26, ERG27 and ERG28. ERG28 acts as a scaffold to tether ERG27 and other 4,4-demethylation-related enzymes, forming a demethylation enzyme complex, in the endoplasmic reticulum. Interacts with ERG25 and ERG28. Also interacts with ERG7, but only in lipid particles.

The protein resides in the endoplasmic reticulum membrane. Its subcellular location is the lipid droplet. The enzyme catalyses 3-dehydro-4alpha-methylzymosterol + NADPH + H(+) = 4alpha-methylzymosterol + NADP(+). The protein operates within steroid biosynthesis; zymosterol biosynthesis; zymosterol from lanosterol: step 5/6. 3-keto-steroid reductase; part of the third module of ergosterol biosynthesis pathway that includes the late steps of the pathway. ERG27 is a catalytic component of the C-4 demethylation complex that catalyze the reduction of the keto group on the C-3. The third module or late pathway involves the ergosterol synthesis itself through consecutive reactions that mainly occur in the endoplasmic reticulum (ER) membrane. Firstly, the squalene synthase ERG9 catalyzes the condensation of 2 farnesyl pyrophosphate moieties to form squalene, which is the precursor of all steroids. Squalene synthase is crucial for balancing the incorporation of farnesyl diphosphate (FPP) into sterol and nonsterol isoprene synthesis. Secondly, the squalene epoxidase ERG1 catalyzes the stereospecific oxidation of squalene to (S)-2,3-epoxysqualene, which is considered to be a rate-limiting enzyme in steroid biosynthesis. Then, the lanosterol synthase ERG7 catalyzes the cyclization of (S)-2,3 oxidosqualene to lanosterol, a reaction that forms the sterol core. In the next steps, lanosterol is transformed to zymosterol through a complex process involving various demethylation, reduction and desaturation reactions. The lanosterol 14-alpha-demethylase ERG11 (also known as CYP51) catalyzes C14-demethylation of lanosterol to produce 4,4'-dimethyl cholesta-8,14,24-triene-3-beta-ol, which is critical for ergosterol biosynthesis. The C-14 reductase ERG24 reduces the C14=C15 double bond of 4,4-dimethyl-cholesta-8,14,24-trienol to produce 4,4-dimethyl-cholesta-8,24-dienol. 4,4-dimethyl-cholesta-8,24-dienol is substrate of the C-4 demethylation complex ERG25-ERG26-ERG27 in which ERG25 catalyzes the three-step monooxygenation required for the demethylation of 4,4-dimethyl and 4alpha-methylsterols, ERG26 catalyzes the oxidative decarboxylation that results in a reduction of the 3-beta-hydroxy group at the C-3 carbon to an oxo group, and ERG27 is responsible for the reduction of the keto group on the C-3. ERG28 has a role as a scaffold to help anchor ERG25, ERG26 and ERG27 to the endoplasmic reticulum and ERG29 regulates the activity of the iron-containing C4-methylsterol oxidase ERG25. Then, the sterol 24-C-methyltransferase ERG6 catalyzes the methyl transfer from S-adenosyl-methionine to the C-24 of zymosterol to form fecosterol. The C-8 sterol isomerase ERG2 catalyzes the reaction which results in unsaturation at C-7 in the B ring of sterols and thus converts fecosterol to episterol. The sterol-C5-desaturase ERG3 then catalyzes the introduction of a C-5 double bond in the B ring to produce 5-dehydroepisterol. The C-22 sterol desaturase ERG5 further converts 5-dehydroepisterol into ergosta-5,7,22,24(28)-tetraen-3beta-ol by forming the C-22(23) double bond in the sterol side chain. Finally, ergosta-5,7,22,24(28)-tetraen-3beta-ol is substrate of the C-24(28) sterol reductase ERG4 to produce ergosterol. In terms of biological role, facilitates the association of ERG7 with lipid particles preventing its digestion in the endoplasmic reticulum and the lipid particles. This chain is 3-keto-steroid reductase ERG27, found in Saccharomyces cerevisiae (strain ATCC 204508 / S288c) (Baker's yeast).